Here is a 486-residue protein sequence, read N- to C-terminus: Protein DETOXIFICATION 27 (486 aa).

Residues 1-25 are disordered; sequence MRGGDGEEGSESRVALLKSPHTAEE. The next 12 membrane-spanning stretches (helical) occupy residues 41–61, 74–94, 124–144, 153–173, 189–209, 216–236, 269–289, 299–319, 349–369, 384–404, 407–427, and 439–461; these read LWQI…MLVI, LAAI…LLLG, IVLF…TPVL, IAEL…AFTL, VTAY…WLFV, VVGT…ILLV, GVML…TGNL, LSIC…FFAG, IIGL…AWIF, LLLA…GVAV, GWQS…GVPL, and VMGI…LSFI.

Belongs to the multi antimicrobial extrusion (MATE) (TC 2.A.66.1) family.

It localises to the membrane. The protein is Protein DETOXIFICATION 27 of Arabidopsis thaliana (Mouse-ear cress).